The primary structure comprises 92 residues: Small ribosomal subunit protein uS19 (92 aa).

It belongs to the universal ribosomal protein uS19 family.

Functionally, protein S19 forms a complex with S13 that binds strongly to the 16S ribosomal RNA. This Magnetococcus marinus (strain ATCC BAA-1437 / JCM 17883 / MC-1) protein is Small ribosomal subunit protein uS19.